A 122-amino-acid chain; its full sequence is Large ribosomal subunit protein uL14 (122 aa).

This sequence belongs to the universal ribosomal protein uL14 family. In terms of assembly, part of the 50S ribosomal subunit. Forms a cluster with proteins L3 and L19. In the 70S ribosome, L14 and L19 interact and together make contacts with the 16S rRNA in bridges B5 and B8.

Binds to 23S rRNA. Forms part of two intersubunit bridges in the 70S ribosome. This Cyanothece sp. (strain PCC 7425 / ATCC 29141) protein is Large ribosomal subunit protein uL14.